The primary structure comprises 77 residues: Cell division topological specificity factor (77 aa).

The protein belongs to the MinE family.

Prevents the cell division inhibition by proteins MinC and MinD at internal division sites while permitting inhibition at polar sites. This ensures cell division at the proper site by restricting the formation of a division septum at the midpoint of the long axis of the cell. This chain is Cell division topological specificity factor, found in Helicobacter pylori (strain HPAG1).